The chain runs to 910 residues: MLEKTYDAAATEPKIAERWEEAGAFKAGAGAKPGADPFAVVIPPPNVTGSLHMGHALNNTIQDIMVRFERMRGKNVLWQPGIDHAGIATQMVVERQLAERKEPNRHAMGREKFIERIWQWKAESGGMISNQLRRLGASCDWSRERFTMDEGLSRAVLEVFVTLYKQGLIYRDKRLVNWDPKLLTAISDIEVESREIKGHLWHFRYPLENVPFDPENPHTYIIVATTRPETMLGDTGVAVNPKDERYHALVGNDVILPLVGRHIPIVADDYADPEAGSGAVKITPAHDFNDFEVGKRNNLRAINILTPEAAITLKDNVDFLEDLELTAELKALIVELDGMDRFAARKRIVELMDERGYLEKIDDHTHAVPHGDRGGVPIEPYLTDQWYVNAGELAKPAMAAVRDGRTQIVPKNWEKTYFDWMENIQPWCVSRQLWWGHQIPAWYGPDGHCFVEKSEAEAKAAARAHYGEDVALERDTDVLDTWFSSALWPFSTLGWPDKTPELATYYPTSVLVTGFDILFFWVARMMMMGLHFMEEIPFHTVYLHALVRDKHGAKMSKSKGNVIDPLELMDEYGADALRFTLAIMAAQGRDVKLDPARIAGYRNFGTKLWNATRFAQMNGVKLAPDFRPENAKLAVNRWILTELTRATRAVTEGIATYRFNEAAGAAYRFVWNQFCDWYLEFLKPIFMGDDEAAKAEAQATAAYCLDQVYKLLHPFMPFMTEELWSLTASEGKKRDTVLALAEWPELSFEDEDAAADINWLVDLVTGIRSVRAEMNVPAGAIAPVVVLDANKVTVDRFARHDAAIKRLARVERISFEQQAPKGAAQMLLGEATICIPLGSLIDLQAEAARLAKEAGKIAAEMDRIEKKLANEKFVANAREEVVEAERERLVELKEAAQRVATAESRIRDAS.

A 'HIGH' region motif is present at residues 45–55; sequence PNVTGSLHMGH. The short motif at 554-558 is the 'KMSKS' region element; that stretch reads KMSKS. An ATP-binding site is contributed by Lys-557. Residues 842–910 are a coiled coil; that stretch reads DLQAEAARLA…TAESRIRDAS (69 aa).

This sequence belongs to the class-I aminoacyl-tRNA synthetase family. ValS type 1 subfamily. As to quaternary structure, monomer.

The protein localises to the cytoplasm. It carries out the reaction tRNA(Val) + L-valine + ATP = L-valyl-tRNA(Val) + AMP + diphosphate. Functionally, catalyzes the attachment of valine to tRNA(Val). As ValRS can inadvertently accommodate and process structurally similar amino acids such as threonine, to avoid such errors, it has a 'posttransfer' editing activity that hydrolyzes mischarged Thr-tRNA(Val) in a tRNA-dependent manner. The chain is Valine--tRNA ligase from Brucella suis biovar 1 (strain 1330).